A 376-amino-acid polypeptide reads, in one-letter code: Metal tolerance protein 6 (376 aa).

Residues 1 to 28 (MAAAAGVAAGTGRGSGEGEELLPNAVEG) form a disordered region. The Cytoplasmic segment spans residues 1–123 (MAAAAGVAAG…CEKVARSEAL (123 aa)). The helical transmembrane segment at 124-144 (AIRLSNIANMVLFAAKVYASI) threads the bilayer. At 145–149 (RSGSL) the chain is on the vacuolar side. Residues 150-170 (AIIASTLDSLLDLLSGFILWF) traverse the membrane as a helical segment. Over 171–191 (TAFSKKTSNPYRYPIGKRRMQ) the chain is Cytoplasmic. The chain crosses the membrane as a helical span at residues 192–212 (PLGILVFASVMATLGLQIILE). The Vacuolar portion of the chain corresponds to 213 to 231 (STRSLFYDGDTFRLTKEQE). A helical membrane pass occupies residues 232-252 (KWVVDIMLSVTSVKLLLVVYC). The Cytoplasmic portion of the chain corresponds to 253–376 (RSFTNEILAI…PEHARSHDTL (124 aa)).

Belongs to the cation diffusion facilitator (CDF) transporter (TC 2.A.4) family. SLC30A subfamily.

It localises to the vacuole membrane. Functionally, involved in sequestration of excess metal in the cytoplasm into vacuoles to maintain metal homeostasis. This is Metal tolerance protein 6 (MTP6) from Oryza sativa subsp. japonica (Rice).